The sequence spans 247 residues: 1-(5-phosphoribosyl)-5-[(5-phosphoribosylamino)methylideneamino] imidazole-4-carboxamide isomerase 1 (247 aa).

E8 (proton acceptor) is an active-site residue. D128 (proton donor) is an active-site residue.

This sequence belongs to the HisA/HisF family.

It is found in the cytoplasm. The enzyme catalyses 1-(5-phospho-beta-D-ribosyl)-5-[(5-phospho-beta-D-ribosylamino)methylideneamino]imidazole-4-carboxamide = 5-[(5-phospho-1-deoxy-D-ribulos-1-ylimino)methylamino]-1-(5-phospho-beta-D-ribosyl)imidazole-4-carboxamide. It functions in the pathway amino-acid biosynthesis; L-histidine biosynthesis; L-histidine from 5-phospho-alpha-D-ribose 1-diphosphate: step 4/9. The chain is 1-(5-phosphoribosyl)-5-[(5-phosphoribosylamino)methylideneamino] imidazole-4-carboxamide isomerase 1 from Ruegeria sp. (strain TM1040) (Silicibacter sp.).